The chain runs to 1706 residues: Histone acetyltransferase HAC12 (1706 aa).

Disordered regions lie at residues 1-33, 251-284, 397-456, and 524-543; these read MNVQAHMSGQRSGQVPNQGTVPQNNGNSQMQNL, TNNNSGGFSAEPTIVPQSQQQQQRQHTGGQNSHM, VSRV…LGKT, and QNSQQIQQMMHPQNIGSDSS. Positions 397–406 are enriched in polar residues; sequence VSRVNSSLSH. A compositionally biased stretch (low complexity) spans 407–434; the sequence is QQQFQQPPNRFQQQPNQIQQQQQQFLNQ. Residues 637–716 form a TAZ-type 1 zinc finger; sequence HDPKFKNQQR…DPRCPVCVPV (80 aa). The segment at 791–909 is disordered; that stretch reads TESCKSSIVS…PELTSKSRKP (119 aa). Over residues 794 to 805 the composition is skewed to polar residues; the sequence is CKSSIVSTTEAD. Composition is skewed to basic and acidic residues over residues 809-829 and 870-896; these read DAERKDHRPLKSETMEVKVEI and PKQENIKMKKEPGWPKKEPGCPKKEEL. The PHD-type zinc finger occupies 998–1075; the sequence is HYFCIPCYNE…EYTCPYCYVI (78 aa). In terms of domain architecture, CBP/p300-type HAT spans 1090–1526; it reads VLGAKDLPRT…VLYHLHNPTA (437 aa). Acetyl-CoA-binding positions include 1213–1215, 1232–1233, and Trp-1288; these read LDS and RT. 2 consecutive ZZ-type zinc fingers follow at residues 1408–1471 and 1528–1581; these read HLQH…IADI and AFVT…SLAD. Residues Cys-1413, Cys-1416, Cys-1428, Cys-1431, Cys-1437, Cys-1440, His-1453, His-1461, Cys-1533, Cys-1536, Cys-1548, Cys-1551, Cys-1557, Cys-1560, His-1569, and His-1571 each coordinate Zn(2+). The TAZ-type 2 zinc-finger motif lies at 1588–1671; the sequence is EARQLRVLQL…ECDVPRCGDL (84 aa).

Its subcellular location is the nucleus. The enzyme catalyses L-lysyl-[protein] + acetyl-CoA = N(6)-acetyl-L-lysyl-[protein] + CoA + H(+). In terms of biological role, acetyltransferase enzyme. Acetylates histones, giving a specific tag for transcriptional activation. This is Histone acetyltransferase HAC12 (HAC12) from Arabidopsis thaliana (Mouse-ear cress).